The following is a 214-amino-acid chain: Phosphopantothenoylcysteine decarboxylase HAL3 (214 aa).

FMN contacts are provided by residues 30–32 (GSV) and 55–57 (TRA). His92 functions as the Proton donor in the catalytic mechanism. Residues 108 to 111 (SANT) and Ala142 each bind FMN. Positions 144, 174, and 176 each coordinate N-[(R)-4-phosphopantothenoyl]-L-cysteine. Cys177 (proton donor) is an active-site residue. Residue Met185 participates in N-[(R)-4-phosphopantothenoyl]-L-cysteine binding.

This sequence belongs to the HFCD (homooligomeric flavin containing Cys decarboxylase) superfamily. As to quaternary structure, homotrimer. FMN is required as a cofactor. Mainly expressed in stems, to a lower extent in flowers, leaves and fruits, and at basal levels in roots.

The protein localises to the cell membrane. The protein resides in the cytoplasm. It catalyses the reaction N-[(R)-4-phosphopantothenoyl]-L-cysteine + H(+) = (R)-4'-phosphopantetheine + CO2. It functions in the pathway cofactor biosynthesis; coenzyme A biosynthesis; CoA from (R)-pantothenate: step 3/5. In terms of biological role, involved in plant growth, and promotes salt and osmotic tolerance, probably via coenzyme A (CoA) accumulation and endogenous proline accumulation. Catalyzes the decarboxylation of 4'-phosphopantothenoylcysteine to 4'-phosphopantetheine, a key step in coenzyme A biosynthesis. Required for roots development. The chain is Phosphopantothenoylcysteine decarboxylase HAL3 from Malus domestica (Apple).